A 242-amino-acid chain; its full sequence is ATP-dependent dethiobiotin synthetase BioD 1 (242 aa).

Residue 12–17 (NVGKTT) participates in ATP binding. Thr-16 is a Mg(2+) binding site. Lys-37 is a catalytic residue. Position 66 (Asp-66) interacts with ATP. Residues Asp-66 and Glu-124 each contribute to the Mg(2+) site. ATP is bound by residues 184–185 (NR), 213–215 (PYL), and Glu-220.

This sequence belongs to the dethiobiotin synthetase family. As to quaternary structure, homodimer. Mg(2+) is required as a cofactor.

It localises to the cytoplasm. It carries out the reaction (7R,8S)-7,8-diammoniononanoate + CO2 + ATP = (4R,5S)-dethiobiotin + ADP + phosphate + 3 H(+). Its pathway is cofactor biosynthesis; biotin biosynthesis; biotin from 7,8-diaminononanoate: step 1/2. Catalyzes a mechanistically unusual reaction, the ATP-dependent insertion of CO2 between the N7 and N8 nitrogen atoms of 7,8-diaminopelargonic acid (DAPA, also called 7,8-diammoniononanoate) to form a ureido ring. The sequence is that of ATP-dependent dethiobiotin synthetase BioD 1 from Haemophilus influenzae (strain ATCC 51907 / DSM 11121 / KW20 / Rd).